The following is a 167-amino-acid chain: NAD(P)H-quinone oxidoreductase subunit I, chloroplastic (167 aa).

2 4Fe-4S ferredoxin-type domains span residues 55-84 (GRIHFEFDKCIACEVCVRVCPIDLPVVDWK) and 95-124 (LNYSIDFGICIFCGNCVEYCPTNCLSMTEE). [4Fe-4S] cluster contacts are provided by Cys-64, Cys-67, Cys-70, Cys-74, Cys-104, Cys-107, Cys-110, and Cys-114.

The protein belongs to the complex I 23 kDa subunit family. NDH is composed of at least 16 different subunits, 5 of which are encoded in the nucleus. [4Fe-4S] cluster serves as cofactor.

The protein localises to the plastid. It localises to the chloroplast thylakoid membrane. The enzyme catalyses a plastoquinone + NADH + (n+1) H(+)(in) = a plastoquinol + NAD(+) + n H(+)(out). It catalyses the reaction a plastoquinone + NADPH + (n+1) H(+)(in) = a plastoquinol + NADP(+) + n H(+)(out). NDH shuttles electrons from NAD(P)H:plastoquinone, via FMN and iron-sulfur (Fe-S) centers, to quinones in the photosynthetic chain and possibly in a chloroplast respiratory chain. The immediate electron acceptor for the enzyme in this species is believed to be plastoquinone. Couples the redox reaction to proton translocation, and thus conserves the redox energy in a proton gradient. This is NAD(P)H-quinone oxidoreductase subunit I, chloroplastic from Panax ginseng (Korean ginseng).